Here is a 99-residue protein sequence, read N- to C-terminus: Integration host factor subunit alpha (99 aa).

It belongs to the bacterial histone-like protein family. As to quaternary structure, heterodimer of an alpha and a beta chain.

Functionally, this protein is one of the two subunits of integration host factor, a specific DNA-binding protein that functions in genetic recombination as well as in transcriptional and translational control. The protein is Integration host factor subunit alpha of Thioalkalivibrio sulfidiphilus (strain HL-EbGR7).